We begin with the raw amino-acid sequence, 1299 residues long: DNA-directed RNA polymerase subunit beta' (1299 aa).

4 residues coordinate Zn(2+): Cys60, Cys62, Cys75, and Cys78. Mg(2+) is bound by residues Asp535, Asp537, and Asp539. Zn(2+) contacts are provided by Cys877, Cys954, Cys961, and Cys964.

This sequence belongs to the RNA polymerase beta' chain family. In terms of assembly, the RNAP catalytic core consists of 2 alpha, 1 beta, 1 beta' and 1 omega subunit. When a sigma factor is associated with the core the holoenzyme is formed, which can initiate transcription. It depends on Mg(2+) as a cofactor. Requires Zn(2+) as cofactor.

The enzyme catalyses RNA(n) + a ribonucleoside 5'-triphosphate = RNA(n+1) + diphosphate. DNA-dependent RNA polymerase catalyzes the transcription of DNA into RNA using the four ribonucleoside triphosphates as substrates. The sequence is that of DNA-directed RNA polymerase subunit beta' from Pseudarthrobacter chlorophenolicus (strain ATCC 700700 / DSM 12829 / CIP 107037 / JCM 12360 / KCTC 9906 / NCIMB 13794 / A6) (Arthrobacter chlorophenolicus).